The primary structure comprises 483 residues: Cysteine--tRNA ligase (483 aa).

Cys-29 lines the Zn(2+) pocket. The 'HIGH' region signature appears at 31–41 (PTVYGHAHLGH). Positions 221, 246, and 250 each coordinate Zn(2+). The short motif at 278 to 282 (KMGKS) is the 'KMSKS' region element. An ATP-binding site is contributed by Lys-281.

Belongs to the class-I aminoacyl-tRNA synthetase family. In terms of assembly, monomer. The cofactor is Zn(2+).

The protein localises to the cytoplasm. The enzyme catalyses tRNA(Cys) + L-cysteine + ATP = L-cysteinyl-tRNA(Cys) + AMP + diphosphate. This is Cysteine--tRNA ligase from Chlorobium luteolum (strain DSM 273 / BCRC 81028 / 2530) (Pelodictyon luteolum).